Here is a 439-residue protein sequence, read N- to C-terminus: Potassium/proton antiporter CemA (439 aa).

6 helical membrane passes run 55 to 75, 79 to 99, 220 to 240, 317 to 337, 364 to 384, and 399 to 419; these read IMLYINTNLNNCVFIIYWSLL, ISLFFFDFIKTFVLIISNFFN, YMLFLLFIPWGFSSLLKIWFL, LLHLLTDIVYVITLSAVFILG, ILLLTDLCIGFHSPHGWEIVI, and IISCFVSTFPVILDTVFKYWI.

This sequence belongs to the CemA family.

Its subcellular location is the plastid. It is found in the chloroplast inner membrane. The catalysed reaction is K(+)(in) + H(+)(out) = K(+)(out) + H(+)(in). Its function is as follows. Contributes to K(+)/H(+) antiport activity by supporting proton efflux to control proton extrusion and homeostasis in chloroplasts in a light-dependent manner to modulate photosynthesis. Prevents excessive induction of non-photochemical quenching (NPQ) under continuous-light conditions. Indirectly promotes efficient inorganic carbon uptake into chloroplasts. This Physcomitrium patens (Spreading-leaved earth moss) protein is Potassium/proton antiporter CemA.